The following is a 326-amino-acid chain: Phospho-N-acetylmuramoyl-pentapeptide-transferase (326 aa).

10 helical membrane passes run 5–25 (GLLITIVVAFLITVLLSPIFI), 51–71 (TPTMGGLMIIFSIIITSLIMA), 82–102 (VWLLIFVLFGYGLLGFLDDFI), 122–142 (IIIALVFYFILRNQGFSTVIY), 148–168 (LQFDIGWFYAVLVIFMMVGAS), 180–200 (LLAGTAAIAFGAFAIIAWYGI), 204–224 (VVAVFSLAVVGALLGFLVFNA), 229–249 (VFMGDTGSLALGGAIAAISIL), 252–272 (LEILLIIIGGVFVIETLSVII), and 304–324 (VVTTFWLVGLLFAMLGVYIEV).

The protein belongs to the glycosyltransferase 4 family. MraY subfamily. The cofactor is Mg(2+).

The protein localises to the cell membrane. The catalysed reaction is UDP-N-acetyl-alpha-D-muramoyl-L-alanyl-gamma-D-glutamyl-meso-2,6-diaminopimeloyl-D-alanyl-D-alanine + di-trans,octa-cis-undecaprenyl phosphate = di-trans,octa-cis-undecaprenyl diphospho-N-acetyl-alpha-D-muramoyl-L-alanyl-D-glutamyl-meso-2,6-diaminopimeloyl-D-alanyl-D-alanine + UMP. It functions in the pathway cell wall biogenesis; peptidoglycan biosynthesis. Catalyzes the initial step of the lipid cycle reactions in the biosynthesis of the cell wall peptidoglycan: transfers peptidoglycan precursor phospho-MurNAc-pentapeptide from UDP-MurNAc-pentapeptide onto the lipid carrier undecaprenyl phosphate, yielding undecaprenyl-pyrophosphoryl-MurNAc-pentapeptide, known as lipid I. The polypeptide is Phospho-N-acetylmuramoyl-pentapeptide-transferase (Oceanobacillus iheyensis (strain DSM 14371 / CIP 107618 / JCM 11309 / KCTC 3954 / HTE831)).